A 524-amino-acid polypeptide reads, in one-letter code: MLLRSVWYKLGSLLIILPLTGCGYVRLKRANFQTDFTINRIPTQGDVYHDNYDLTFSLNFATSSKDSYGTGWLIDWKGDENKPSNTDPFLIYLATNLHVVDALRNPQDYEPYNKDSNGQDYGNRDITHFFALGKYTDPGLLGVETKEQSAFISIQTSAIPKTAYTANDFVDYQYDSLTKQWNKKSDQKDQTQEQTVIGQSWSYKPAYADFAVIEVPLFLDNVRDKQVFDYFVKPAIETYKKLGDTAQLFTEQNLKELEKETYIMLGYPVVESNIYAHILGQGKELRVTQQVNNQPVKKNYVLQTITKEQHTLDITREIPTLIQNKSLSGDFVGSKLLSQEEQQQEHAFLGNLNQGIIDFARLSNFNLQYHNREYQQYGKGLALANTNFSGGSSGTLVLNQQKQISGVYFGVLEFGGTNGTNRESSIGVGQILRVKDDAQLQQHSHNNLLSQLGSSHNSITYDIIFGNKDTKNYYAQFAKKHQTHLYSQISSSNQQELKYVDNDPNLKIKEEAAKSTVQNLTVYS.

Residues 1–21 (MLLRSVWYKLGSLLIILPLTG) form the signal peptide. A lipid anchor (N-palmitoyl cysteine) is attached at Cys-22. Cys-22 carries S-diacylglycerol cysteine lipidation.

The protein belongs to the MG067/MG068/MG395 family.

The protein localises to the cell membrane. This is an uncharacterized protein from Mycoplasma pneumoniae (strain ATCC 29342 / M129 / Subtype 1) (Mycoplasmoides pneumoniae).